Reading from the N-terminus, the 267-residue chain is MTQIHPTALVDPKAELAADVSVGPFSIVGPNVRIGSGTRIGSHTTVEGHTTIGAGNNIGPYASVGGVPQDMKYRNEPTRLEIGDRNTIREFTTIHTGTVQDRGLTSIGNDNWIMAYVHIAHDCMVGNHTVFSSNAQIAGHVEVGDWAILGGMSGVHQFVRIGAHAMLGGASALVQDVPPFVIAASDKSGNKATPHGINVEGLRRRGFDAGQIAALRQAYKLLYKSDLSFDEARTEISALLAQVDAGTAAPLQAFVDFLAATQRGIVR.

Belongs to the transferase hexapeptide repeat family. LpxA subfamily. In terms of assembly, homotrimer.

It is found in the cytoplasm. It carries out the reaction a (3R)-hydroxyacyl-[ACP] + UDP-N-acetyl-alpha-D-glucosamine = a UDP-3-O-[(3R)-3-hydroxyacyl]-N-acetyl-alpha-D-glucosamine + holo-[ACP]. The protein operates within glycolipid biosynthesis; lipid IV(A) biosynthesis; lipid IV(A) from (3R)-3-hydroxytetradecanoyl-[acyl-carrier-protein] and UDP-N-acetyl-alpha-D-glucosamine: step 1/6. Involved in the biosynthesis of lipid A, a phosphorylated glycolipid that anchors the lipopolysaccharide to the outer membrane of the cell. This chain is Acyl-[acyl-carrier-protein]--UDP-N-acetylglucosamine O-acyltransferase, found in Cupriavidus taiwanensis (strain DSM 17343 / BCRC 17206 / CCUG 44338 / CIP 107171 / LMG 19424 / R1) (Ralstonia taiwanensis (strain LMG 19424)).